A 444-amino-acid polypeptide reads, in one-letter code: Homocysteine/cysteine synthase (444 aa).

Position 208 is an N6-(pyridoxal phosphate)lysine (Lys-208).

This sequence belongs to the trans-sulfuration enzymes family. As to quaternary structure, homotetramer. Pyridoxal 5'-phosphate serves as cofactor.

The protein localises to the cytoplasm. The catalysed reaction is O-acetyl-L-homoserine + methanethiol = L-methionine + acetate + H(+). It catalyses the reaction O-acetyl-L-homoserine + hydrogen sulfide = L-homocysteine + acetate. It carries out the reaction O-acetyl-L-serine + hydrogen sulfide = L-cysteine + acetate. It participates in amino-acid biosynthesis; L-methionine biosynthesis via de novo pathway; L-homocysteine from O-acetyl-L-homoserine. It functions in the pathway amino-acid biosynthesis; L-cysteine biosynthesis; L-cysteine from L-serine: step 2/2. Functionally, catalyzes the conversion of O-acetyl-L-homoserine (OAH) into homocysteine in the methionine biosynthesis pathway. Also catalyzes the conversion of O-acetylserine (OAS) into cysteine, the last step in the cysteine biosynthesis pathway. The protein is Homocysteine/cysteine synthase (MET17) of Kluyveromyces lactis (strain ATCC 8585 / CBS 2359 / DSM 70799 / NBRC 1267 / NRRL Y-1140 / WM37) (Yeast).